Consider the following 467-residue polypeptide: Ribulose bisphosphate carboxylase large chain (467 aa).

Positions 106 and 156 each coordinate substrate. The active-site Proton acceptor is the Lys-158. Lys-160 lines the substrate pocket. Mg(2+) is bound by residues Lys-184, Asp-186, and Glu-187. N6-carboxylysine is present on Lys-184. Catalysis depends on His-276, which acts as the Proton acceptor. Substrate is bound by residues Arg-277, His-309, and Ser-361.

This sequence belongs to the RuBisCO large chain family. Type I subfamily. In terms of assembly, heterohexadecamer of 8 large chains and 8 small chains. Requires Mg(2+) as cofactor.

The protein resides in the plastid. Its subcellular location is the chloroplast. It carries out the reaction 2 (2R)-3-phosphoglycerate + 2 H(+) = D-ribulose 1,5-bisphosphate + CO2 + H2O. The catalysed reaction is D-ribulose 1,5-bisphosphate + O2 = 2-phosphoglycolate + (2R)-3-phosphoglycerate + 2 H(+). RuBisCO catalyzes two reactions: the carboxylation of D-ribulose 1,5-bisphosphate, the primary event in carbon dioxide fixation, as well as the oxidative fragmentation of the pentose substrate in the photorespiration process. Both reactions occur simultaneously and in competition at the same active site. This Chondrus crispus (Carrageen Irish moss) protein is Ribulose bisphosphate carboxylase large chain (rbcL).